The following is a 257-amino-acid chain: uncharacterized protein (257 aa).

A run of 6 helical transmembrane segments spans residues 5 to 25 (FLYF…IVTF), 29 to 49 (LALV…GTLI), 53 to 73 (TLSF…GDWI), 146 to 166 (LGCI…GIAI), 180 to 200 (IQFL…WKLW), and 216 to 236 (VNLC…MIYI).

This sequence belongs to the DedA family.

It localises to the cell membrane. This is an uncharacterized protein from Buchnera aphidicola subsp. Baizongia pistaciae (strain Bp).